We begin with the raw amino-acid sequence, 214 residues long: tRNA (guanine-N(7)-)-methyltransferase (214 aa).

4 residues coordinate S-adenosyl-L-methionine: Glu-43, Glu-68, Asp-95, and Asp-117. Residue Asp-117 is part of the active site. Substrate is bound by residues Lys-121, Asp-153, and Thr-190–Glu-193.

It belongs to the class I-like SAM-binding methyltransferase superfamily. TrmB family.

It carries out the reaction guanosine(46) in tRNA + S-adenosyl-L-methionine = N(7)-methylguanosine(46) in tRNA + S-adenosyl-L-homocysteine. Its pathway is tRNA modification; N(7)-methylguanine-tRNA biosynthesis. Catalyzes the formation of N(7)-methylguanine at position 46 (m7G46) in tRNA. This chain is tRNA (guanine-N(7)-)-methyltransferase, found in Staphylococcus aureus (strain USA300).